A 270-amino-acid chain; its full sequence is Putative phosphoenolpyruvate synthase regulatory protein (270 aa).

ADP is bound at residue 150 to 157; that stretch reads GVSRCGKT.

It belongs to the pyruvate, phosphate/water dikinase regulatory protein family. PSRP subfamily.

It catalyses the reaction [pyruvate, water dikinase] + ADP = [pyruvate, water dikinase]-phosphate + AMP + H(+). The catalysed reaction is [pyruvate, water dikinase]-phosphate + phosphate + H(+) = [pyruvate, water dikinase] + diphosphate. Its function is as follows. Bifunctional serine/threonine kinase and phosphorylase involved in the regulation of the phosphoenolpyruvate synthase (PEPS) by catalyzing its phosphorylation/dephosphorylation. The polypeptide is Putative phosphoenolpyruvate synthase regulatory protein (Shewanella pealeana (strain ATCC 700345 / ANG-SQ1)).